The chain runs to 105 residues: uncharacterized protein (105 aa).

At 1 to 48 the chain is on the extracellular side; the sequence is MAPKAFFVCLPWVLPRHALIVRQAGNPYHFLAYTNPRAPGKLQDSHCP. A helical transmembrane segment spans residues 49 to 69; that stretch reads VFFMGIIIITIITVTLAIIII. Asparagine 70 is a topological domain (cytoplasmic). Residues 71-91 form a helical membrane-spanning segment; the sequence is IIFLTLFDDGMCFYCSLLTFS. At 92–105 the chain is on the extracellular side; that stretch reads FVSFNFDHFDHFDL.

Its subcellular location is the membrane. This is an uncharacterized protein from Saccharomyces cerevisiae (strain ATCC 204508 / S288c) (Baker's yeast).